Here is a 129-residue protein sequence, read N- to C-terminus: UPF0225 protein XC_4246 (129 aa).

The protein belongs to the UPF0225 family.

This Xanthomonas campestris pv. campestris (strain 8004) protein is UPF0225 protein XC_4246.